The primary structure comprises 219 residues: 2-hydroxy-3-keto-5-methylthiopentenyl-1-phosphate phosphatase (219 aa).

This sequence belongs to the HAD-like hydrolase superfamily. MtnX family.

The enzyme catalyses 2-hydroxy-5-methylsulfanyl-3-oxopent-1-enyl phosphate + H2O = 1,2-dihydroxy-5-(methylsulfanyl)pent-1-en-3-one + phosphate. It functions in the pathway amino-acid biosynthesis; L-methionine biosynthesis via salvage pathway; L-methionine from S-methyl-5-thio-alpha-D-ribose 1-phosphate: step 4/6. Dephosphorylates 2-hydroxy-3-keto-5-methylthiopentenyl-1-phosphate (HK-MTPenyl-1-P) yielding 1,2-dihydroxy-3-keto-5-methylthiopentene (DHK-MTPene). The polypeptide is 2-hydroxy-3-keto-5-methylthiopentenyl-1-phosphate phosphatase (Bacillus cytotoxicus (strain DSM 22905 / CIP 110041 / 391-98 / NVH 391-98)).